The following is a 235-amino-acid chain: Lipoprotein-releasing system ATP-binding protein LolD (235 aa).

One can recognise an ABC transporter domain in the interval 5–235; it reads FALANIYKSF…SIDESGFNKI (231 aa). ATP is bound at residue 40–47; the sequence is GKSGSGKS.

It belongs to the ABC transporter superfamily. Lipoprotein translocase (TC 3.A.1.125) family. The complex is composed of two ATP-binding proteins (LolD) and two transmembrane proteins (LolC and LolE).

It is found in the cell inner membrane. In terms of biological role, part of the ABC transporter complex LolCDE involved in the translocation of mature outer membrane-directed lipoproteins, from the inner membrane to the periplasmic chaperone, LolA. Responsible for the formation of the LolA-lipoprotein complex in an ATP-dependent manner. This is Lipoprotein-releasing system ATP-binding protein LolD from Ehrlichia chaffeensis (strain ATCC CRL-10679 / Arkansas).